The sequence spans 659 residues: Pesticidal crystal protein Cry3Ba (659 aa).

Positions 1–41 (MIRMGGRKMNPNNRSEYDTIKVTPNSELPTNHNQYPLADNP) are disordered. The span at 22–41 (VTPNSELPTNHNQYPLADNP) shows a compositional bias: polar residues.

It belongs to the delta endotoxin family.

Promotes colloidosmotic lysis by binding to the midgut epithelial cells of Coleoptera. The protein is Pesticidal crystal protein Cry3Ba (cry3Ba) of Bacillus thuringiensis subsp. tolworthi.